The primary structure comprises 314 residues: Protein translocase subunit SecF (314 aa).

The next 6 helical transmembrane spans lie at 17–37, 137–157, 158–178, 188–210, 250–270, and 272–292; these read AVAV…TRGL, QGTY…WWRY, ELNF…ITLG, SLPV…IVVF, TLIV…GFAF, and LLVG…LLLV.

The protein belongs to the SecD/SecF family. SecF subfamily. In terms of assembly, forms a complex with SecD. Part of the essential Sec protein translocation apparatus which comprises SecA, SecYEG and auxiliary proteins SecDF. Other proteins may also be involved.

Its subcellular location is the cell inner membrane. Part of the Sec protein translocase complex. Interacts with the SecYEG preprotein conducting channel. SecDF uses the proton motive force (PMF) to complete protein translocation after the ATP-dependent function of SecA. The sequence is that of Protein translocase subunit SecF from Desulfurispirillum indicum (strain ATCC BAA-1389 / DSM 22839 / S5).